Reading from the N-terminus, the 145-residue chain is Large ribosomal subunit protein uL15 (145 aa).

The disordered stretch occupies residues 1–58; sequence MFNLLKPKGASKRRKIVGRGPGSGLGKTSGRGQKGQKARNTSPRLGFEGGQTPLYRRL. Positions 19 to 33 are enriched in gly residues; sequence RGPGSGLGKTSGRGQ.

Belongs to the universal ribosomal protein uL15 family. Part of the 50S ribosomal subunit.

Binds to the 23S rRNA. The protein is Large ribosomal subunit protein uL15 of Borrelia garinii subsp. bavariensis (strain ATCC BAA-2496 / DSM 23469 / PBi) (Borreliella bavariensis).